Here is a 392-residue protein sequence, read N- to C-terminus: tRNA (guanine-N(7)-)-methyltransferase (392 aa).

S-adenosyl-L-methionine-binding residues include Glu123, Glu148, and Asp175. The substrate site is built by Lys201 and Asp231.

The protein belongs to the class I-like SAM-binding methyltransferase superfamily. TrmB family.

It catalyses the reaction guanosine(46) in tRNA + S-adenosyl-L-methionine = N(7)-methylguanosine(46) in tRNA + S-adenosyl-L-homocysteine. It functions in the pathway tRNA modification; N(7)-methylguanine-tRNA biosynthesis. Its function is as follows. Catalyzes the formation of N(7)-methylguanine at position 46 (m7G46) in tRNA. This Campylobacter jejuni subsp. jejuni serotype O:6 (strain 81116 / NCTC 11828) protein is tRNA (guanine-N(7)-)-methyltransferase.